We begin with the raw amino-acid sequence, 292 residues long: Shikimate dehydrogenase (NADP(+)) (292 aa).

Residues 22-24 (SLS) and serine 69 each bind shikimate. Lysine 73 functions as the Proton acceptor in the catalytic mechanism. Shikimate contacts are provided by asparagine 94 and aspartate 111. Residues 135–139 (GVGGA) and isoleucine 236 contribute to the NADP(+) site. Tyrosine 238 provides a ligand contact to shikimate. Glycine 260 serves as a coordination point for NADP(+).

Belongs to the shikimate dehydrogenase family. Homodimer.

It carries out the reaction shikimate + NADP(+) = 3-dehydroshikimate + NADPH + H(+). It functions in the pathway metabolic intermediate biosynthesis; chorismate biosynthesis; chorismate from D-erythrose 4-phosphate and phosphoenolpyruvate: step 4/7. Involved in the biosynthesis of the chorismate, which leads to the biosynthesis of aromatic amino acids. Catalyzes the reversible NADPH linked reduction of 3-dehydroshikimate (DHSA) to yield shikimate (SA). The sequence is that of Shikimate dehydrogenase (NADP(+)) from Streptococcus pyogenes serotype M18 (strain MGAS8232).